Reading from the N-terminus, the 291-residue chain is Lys-63-specific deubiquitinase BRCC36 (291 aa).

Ala2 is subject to N-acetylalanine. An MPN domain is found at 12-179 (VHLESDAFLV…YTCFQSVQAQ (168 aa)). His122, His124, and Asp135 together coordinate Zn(2+). A JAMM motif motif is present at residues 122-135 (HSHPHITVWPSHVD). The residue at position 233 (Ser233) is a Phosphoserine.

It belongs to the peptidase M67A family. BRCC36 subfamily. In terms of assembly, component of the ARISC complex, at least composed of UIMC1/RAP80, ABRAXAS1, BRCC3/BRCC36, BABAM2 and BABAM1/NBA1. Component of the BRCA1-A complex, at least composed of BRCA1, BARD1, UIMC1/RAP80, ABRAXAS1, BRCC3/BRCC36, BABAM2 and BABAM1/NBA1. In the BRCA1-A complex, interacts directly with ABRAXAS1 and BABAM2. Component of the BRISC complex, at least composed of ABRAXAS2, BRCC3/BRCC36, BABAM2 and BABAM1/NBA1. Identified in a complex with SHMT2 and the other subunits of the BRISC complex. In the BRISC complex, interacts directly with ABRAXAS2. Identified in a complex with ABRAXAS2 and NUMA1. The BRISC complex interacts with the CSN complex. Component of the BRCA1/BRCA2 containing complex (BRCC), which also contains BRCA1, BRCA2, BARD1, BABAM2 and RAD51. BRCC is a ubiquitin E3 ligase complex that enhances cellular survival following DNA damage. Interacts with BRCA1. Binds polyubiquitin. Interacts with PWWP2B. Interacts with HDAC1; this interaction is enhanced in the presence of PWWP2B. Requires Zn(2+) as cofactor.

It localises to the nucleus. Its subcellular location is the cytoplasm. The protein resides in the cytoskeleton. It is found in the spindle pole. Functionally, metalloprotease that specifically cleaves 'Lys-63'-linked polyubiquitin chains. Does not have activity toward 'Lys-48'-linked polyubiquitin chains. Component of the BRCA1-A complex, a complex that specifically recognizes 'Lys-63'-linked ubiquitinated histones H2A and H2AX at DNA lesions sites, leading to target the BRCA1-BARD1 heterodimer to sites of DNA damage at double-strand breaks (DSBs). In the BRCA1-A complex, it specifically removes 'Lys-63'-linked ubiquitin on histones H2A and H2AX, antagonizing the RNF8-dependent ubiquitination at double-strand breaks (DSBs). Catalytic subunit of the BRISC complex, a multiprotein complex that specifically cleaves 'Lys-63'-linked ubiquitin in various substrates. Mediates the specific 'Lys-63'-specific deubiquitination associated with the COP9 signalosome complex (CSN), via the interaction of the BRISC complex with the CSN complex. The BRISC complex is required for normal mitotic spindle assembly and microtubule attachment to kinetochores via its role in deubiquitinating NUMA1. Plays a role in interferon signaling via its role in the deubiquitination of the interferon receptor IFNAR1; deubiquitination increases IFNAR1 activity by enhancing its stability and cell surface expression. Acts as a regulator of the NLRP3 inflammasome by mediating deubiquitination of NLRP3, leading to NLRP3 inflammasome assembly. Down-regulates the response to bacterial lipopolysaccharide (LPS) via its role in IFNAR1 deubiquitination. Deubiquitinates HDAC1 and PWWP2B leading to their stabilization. This chain is Lys-63-specific deubiquitinase BRCC36 (Brcc3), found in Rattus norvegicus (Rat).